Here is a 485-residue protein sequence, read N- to C-terminus: NADH-quinone oxidoreductase subunit N (485 aa).

The next 14 helical transmembrane spans lie at 8 to 28, 35 to 55, 71 to 91, 105 to 125, 127 to 147, 159 to 179, 203 to 223, 235 to 255, 271 to 291, 297 to 317, 326 to 346, 373 to 393, 408 to 430, and 455 to 475; these read LIAL…MLSI, FLNA…LWFV, GFAM…CTFA, FYLL…ANHL, ALFL…GYAF, YTIL…LVYA, LLAG…LVPF, PAPV…GVVM, IVLG…ALSQ, LLGY…IALQ, VGVY…VVSL, AAVM…LGFI, WWLV…RVAV, and IVVL…QPLI.

Belongs to the complex I subunit 2 family. In terms of assembly, NDH-1 is composed of 13 different subunits. Subunits NuoA, H, J, K, L, M, N constitute the membrane sector of the complex.

Its subcellular location is the cell inner membrane. It carries out the reaction a quinone + NADH + 5 H(+)(in) = a quinol + NAD(+) + 4 H(+)(out). Functionally, NDH-1 shuttles electrons from NADH, via FMN and iron-sulfur (Fe-S) centers, to quinones in the respiratory chain. The immediate electron acceptor for the enzyme in this species is believed to be ubiquinone. Couples the redox reaction to proton translocation (for every two electrons transferred, four hydrogen ions are translocated across the cytoplasmic membrane), and thus conserves the redox energy in a proton gradient. This chain is NADH-quinone oxidoreductase subunit N, found in Citrobacter koseri (strain ATCC BAA-895 / CDC 4225-83 / SGSC4696).